The primary structure comprises 216 residues: Peptide methionine sulfoxide reductase MsrA (216 aa).

The active site involves C57.

This sequence belongs to the MsrA Met sulfoxide reductase family.

It carries out the reaction L-methionyl-[protein] + [thioredoxin]-disulfide + H2O = L-methionyl-(S)-S-oxide-[protein] + [thioredoxin]-dithiol. The enzyme catalyses [thioredoxin]-disulfide + L-methionine + H2O = L-methionine (S)-S-oxide + [thioredoxin]-dithiol. In terms of biological role, has an important function as a repair enzyme for proteins that have been inactivated by oxidation. Catalyzes the reversible oxidation-reduction of methionine sulfoxide in proteins to methionine. This is Peptide methionine sulfoxide reductase MsrA from Agrobacterium fabrum (strain C58 / ATCC 33970) (Agrobacterium tumefaciens (strain C58)).